We begin with the raw amino-acid sequence, 220 residues long: Thiamine-phosphate synthase (220 aa).

4-amino-2-methyl-5-(diphosphooxymethyl)pyrimidine contacts are provided by residues 39 to 43 and Asn-80; that span reads QLRDK. Mg(2+) contacts are provided by Asp-81 and Asp-100. Ser-119 serves as a coordination point for 4-amino-2-methyl-5-(diphosphooxymethyl)pyrimidine. 145–147 provides a ligand contact to 2-[(2R,5Z)-2-carboxy-4-methylthiazol-5(2H)-ylidene]ethyl phosphate; the sequence is TPT. 4-amino-2-methyl-5-(diphosphooxymethyl)pyrimidine is bound at residue Lys-148. 2-[(2R,5Z)-2-carboxy-4-methylthiazol-5(2H)-ylidene]ethyl phosphate is bound at residue Gly-176.

This sequence belongs to the thiamine-phosphate synthase family. It depends on Mg(2+) as a cofactor.

The enzyme catalyses 2-[(2R,5Z)-2-carboxy-4-methylthiazol-5(2H)-ylidene]ethyl phosphate + 4-amino-2-methyl-5-(diphosphooxymethyl)pyrimidine + 2 H(+) = thiamine phosphate + CO2 + diphosphate. The catalysed reaction is 2-(2-carboxy-4-methylthiazol-5-yl)ethyl phosphate + 4-amino-2-methyl-5-(diphosphooxymethyl)pyrimidine + 2 H(+) = thiamine phosphate + CO2 + diphosphate. It catalyses the reaction 4-methyl-5-(2-phosphooxyethyl)-thiazole + 4-amino-2-methyl-5-(diphosphooxymethyl)pyrimidine + H(+) = thiamine phosphate + diphosphate. Its pathway is cofactor biosynthesis; thiamine diphosphate biosynthesis; thiamine phosphate from 4-amino-2-methyl-5-diphosphomethylpyrimidine and 4-methyl-5-(2-phosphoethyl)-thiazole: step 1/1. Functionally, condenses 4-methyl-5-(beta-hydroxyethyl)thiazole monophosphate (THZ-P) and 2-methyl-4-amino-5-hydroxymethyl pyrimidine pyrophosphate (HMP-PP) to form thiamine monophosphate (TMP). The chain is Thiamine-phosphate synthase from Mycobacterium marinum (strain ATCC BAA-535 / M).